A 63-amino-acid chain; its full sequence is Large ribosomal subunit protein bL28 (63 aa).

It belongs to the bacterial ribosomal protein bL28 family.

The polypeptide is Large ribosomal subunit protein bL28 (Geobacter metallireducens (strain ATCC 53774 / DSM 7210 / GS-15)).